Consider the following 418-residue polypeptide: Putative ion-transport protein YfeO (418 aa).

A run of 12 helical transmembrane segments spans residues 10 to 30, 54 to 74, 99 to 119, 120 to 140, 149 to 169, 186 to 206, 223 to 243, 258 to 278, 300 to 320, 322 to 342, 343 to 363, and 371 to 391; these read LLLS…LIVV, DSPF…GLVI, ALPG…SLGP, EHPI…RLLP, ILAS…AALI, LFAP…FFHP, ILSG…AVWC, VLML…AGPV, DYFL…ASGF, GGRI…LHEH, VPAV…VLVV, and LFMA…CIVM.

The protein belongs to the chloride channel (TC 2.A.49) family.

The protein resides in the cell membrane. This is Putative ion-transport protein YfeO from Escherichia coli O7:K1 (strain IAI39 / ExPEC).